A 491-amino-acid polypeptide reads, in one-letter code: Ketol-acid reductoisomerase (NADP(+)) (491 aa).

Positions 15 to 208 (AQLGKCRFMG…GGHRAGVLES (194 aa)) constitute a KARI N-terminal Rossmann domain. NADP(+)-binding positions include 45-48 (CGAQ), Arg-68, Arg-76, Ser-78, and 108-110 (DKQ). His-132 is a catalytic residue. Gly-158 lines the NADP(+) pocket. KARI C-terminal knotted domains follow at residues 209-344 (SFVA…TAPQ) and 345-484 (YEGK…MTDM). Asp-217, Glu-221, Glu-389, and Glu-393 together coordinate Mg(2+). Ser-414 provides a ligand contact to substrate.

It belongs to the ketol-acid reductoisomerase family. Requires Mg(2+) as cofactor.

It catalyses the reaction (2R)-2,3-dihydroxy-3-methylbutanoate + NADP(+) = (2S)-2-acetolactate + NADPH + H(+). It carries out the reaction (2R,3R)-2,3-dihydroxy-3-methylpentanoate + NADP(+) = (S)-2-ethyl-2-hydroxy-3-oxobutanoate + NADPH + H(+). Its pathway is amino-acid biosynthesis; L-isoleucine biosynthesis; L-isoleucine from 2-oxobutanoate: step 2/4. It participates in amino-acid biosynthesis; L-valine biosynthesis; L-valine from pyruvate: step 2/4. Functionally, involved in the biosynthesis of branched-chain amino acids (BCAA). Catalyzes an alkyl-migration followed by a ketol-acid reduction of (S)-2-acetolactate (S2AL) to yield (R)-2,3-dihydroxy-isovalerate. In the isomerase reaction, S2AL is rearranged via a Mg-dependent methyl migration to produce 3-hydroxy-3-methyl-2-ketobutyrate (HMKB). In the reductase reaction, this 2-ketoacid undergoes a metal-dependent reduction by NADPH to yield (R)-2,3-dihydroxy-isovalerate. This Salmonella typhimurium (strain LT2 / SGSC1412 / ATCC 700720) protein is Ketol-acid reductoisomerase (NADP(+)).